Consider the following 274-residue polypeptide: Thymidylate synthase (274 aa).

Position 21 (Arg-21) interacts with dUMP. His-51 contributes to the (6R)-5,10-methylene-5,6,7,8-tetrahydrofolate binding site. A dUMP-binding site is contributed by 123–124; that stretch reads RR. Cys-156 acts as the Nucleophile in catalysis. Residues 176-179, Asn-187, and 217-219 each bind dUMP; these read RSAD and HIY. Residue Asp-179 coordinates (6R)-5,10-methylene-5,6,7,8-tetrahydrofolate. Position 273 (Ser-273) interacts with (6R)-5,10-methylene-5,6,7,8-tetrahydrofolate.

This sequence belongs to the thymidylate synthase family. Bacterial-type ThyA subfamily. Homodimer.

Its subcellular location is the cytoplasm. The enzyme catalyses dUMP + (6R)-5,10-methylene-5,6,7,8-tetrahydrofolate = 7,8-dihydrofolate + dTMP. It participates in pyrimidine metabolism; dTTP biosynthesis. Functionally, catalyzes the reductive methylation of 2'-deoxyuridine-5'-monophosphate (dUMP) to 2'-deoxythymidine-5'-monophosphate (dTMP) while utilizing 5,10-methylenetetrahydrofolate (mTHF) as the methyl donor and reductant in the reaction, yielding dihydrofolate (DHF) as a by-product. This enzymatic reaction provides an intracellular de novo source of dTMP, an essential precursor for DNA biosynthesis. The polypeptide is Thymidylate synthase (Francisella tularensis subsp. holarctica (strain FTNF002-00 / FTA)).